A 169-amino-acid chain; its full sequence is Endoribonuclease YbeY (169 aa).

Zn(2+) is bound by residues His130, His134, and His140.

This sequence belongs to the endoribonuclease YbeY family. Zn(2+) is required as a cofactor.

The protein localises to the cytoplasm. Single strand-specific metallo-endoribonuclease involved in late-stage 70S ribosome quality control and in maturation of the 3' terminus of the 16S rRNA. The polypeptide is Endoribonuclease YbeY (Neisseria meningitidis serogroup B (strain ATCC BAA-335 / MC58)).